A 124-amino-acid chain; its full sequence is Small ribosomal subunit protein bS6 (124 aa).

The interval 97-124 (EQGPSAMMRRGDRDRSNRSDRRRDRDAA) is disordered. A compositionally biased stretch (basic and acidic residues) spans 105–124 (RRGDRDRSNRSDRRRDRDAA).

This sequence belongs to the bacterial ribosomal protein bS6 family.

Binds together with bS18 to 16S ribosomal RNA. This is Small ribosomal subunit protein bS6 from Zymomonas mobilis subsp. mobilis (strain ATCC 31821 / ZM4 / CP4).